We begin with the raw amino-acid sequence, 214 residues long: Small ribosomal subunit protein uS5 (214 aa).

Residues Leu54–Val117 form the S5 DRBM domain.

This sequence belongs to the universal ribosomal protein uS5 family. As to quaternary structure, part of the 30S ribosomal subunit. Contacts protein S4.

Functionally, with S4 and S12 plays an important role in translational accuracy. This Saccharolobus solfataricus (strain ATCC 35092 / DSM 1617 / JCM 11322 / P2) (Sulfolobus solfataricus) protein is Small ribosomal subunit protein uS5.